Reading from the N-terminus, the 168-residue chain is uncharacterized protein (168 aa).

The segment at residues 1 to 21 (MKLLKALAVLSLATISSHSFA) is a signal peptide (or 19).

This is an uncharacterized protein from Haemophilus influenzae (strain ATCC 51907 / DSM 11121 / KW20 / Rd).